The primary structure comprises 115 residues: Kunitz-type trypsin inhibitor 1 (115 aa).

This sequence belongs to the protease inhibitor I3 (leguminous Kunitz-type inhibitor) family.

Functionally, exhibits Kunitz trypsin protease inhibitor activity. The polypeptide is Kunitz-type trypsin inhibitor 1 (Selenicereus undatus (Pitahaya)).